Consider the following 470-residue polypeptide: Ribulose bisphosphate carboxylase large chain (470 aa).

2 residues coordinate substrate: Asn115 and Thr165. Lys167 acts as the Proton acceptor in catalysis. Lys169 lines the substrate pocket. Positions 193, 195, and 196 each coordinate Mg(2+). Position 193 is an N6-carboxylysine (Lys193). His286 acts as the Proton acceptor in catalysis. 3 residues coordinate substrate: Arg287, His319, and Ser371.

This sequence belongs to the RuBisCO large chain family. Type I subfamily. Heterohexadecamer of 8 large chains and 8 small chains. Requires Mg(2+) as cofactor.

Its subcellular location is the carboxysome. It catalyses the reaction 2 (2R)-3-phosphoglycerate + 2 H(+) = D-ribulose 1,5-bisphosphate + CO2 + H2O. The catalysed reaction is D-ribulose 1,5-bisphosphate + O2 = 2-phosphoglycolate + (2R)-3-phosphoglycerate + 2 H(+). RuBisCO catalyzes two reactions: the carboxylation of D-ribulose 1,5-bisphosphate, the primary event in carbon dioxide fixation, as well as the oxidative fragmentation of the pentose substrate in the photorespiration process. Both reactions occur simultaneously and in competition at the same active site. This Synechococcus sp. (strain CC9311) protein is Ribulose bisphosphate carboxylase large chain.